The chain runs to 220 residues: Small ribosomal subunit protein mS42 (220 aa).

It belongs to the mitochondrion-specific ribosomal protein mS42 family. As to quaternary structure, component of the mitochondrial small ribosomal subunit (mt-SSU). Mature yeast 74S mitochondrial ribosomes consist of a small (37S) and a large (54S) subunit. The 37S small subunit contains a 15S ribosomal RNA (15S mt-rRNA) and at least 32 different proteins. The 54S large subunit contains a 21S rRNA (21S mt-rRNA) and at least 45 different proteins. mS43 forms a dimer with mS42, building a large protuberance adjacent to the mRNA channel exit in the mt-SSU body.

It is found in the mitochondrion. Its function is as follows. Component of the mitochondrial ribosome (mitoribosome), a dedicated translation machinery responsible for the synthesis of mitochondrial genome-encoded proteins, including at least some of the essential transmembrane subunits of the mitochondrial respiratory chain. The mitoribosomes are attached to the mitochondrial inner membrane and translation products are cotranslationally integrated into the membrane. The sequence is that of Small ribosomal subunit protein mS42 from Schizosaccharomyces pombe (strain 972 / ATCC 24843) (Fission yeast).